We begin with the raw amino-acid sequence, 235 residues long: uncharacterized protein (235 aa).

This is an uncharacterized protein from Mycoplasma pneumoniae (strain ATCC 29342 / M129 / Subtype 1) (Mycoplasmoides pneumoniae).